The chain runs to 307 residues: 2-carboxy-1,4-naphthoquinone phytyltransferase (307 aa).

A run of 8 helical transmembrane segments spans residues 27–47, 51–71, 98–118, 125–145, 147–167, 177–197, 223–243, and 284–304; these read MYTV…GLTG, GDVF…INLS, LVFL…MSMS, TVLE…GPPF, LGYL…LAIA, FSWN…IILF, LGSQ…AIGV, and FIAV…YGWA.

Belongs to the MenA family. Type 2 subfamily.

The protein localises to the cell inner membrane. The enzyme catalyses 2-carboxy-1,4-naphthoquinone + phytyl diphosphate + H(+) = demethylphylloquinone + CO2 + diphosphate. It functions in the pathway cofactor biosynthesis; phylloquinone biosynthesis. In terms of biological role, involved in the synthesis of phylloquinone (vitamin K1). Catalyzes the transfer of a prenyl chain to 2-carboxy-1,4-naphthoquinone. This chain is 2-carboxy-1,4-naphthoquinone phytyltransferase, found in Synechocystis sp. (strain ATCC 27184 / PCC 6803 / Kazusa).